Consider the following 86-residue polypeptide: Small ribosomal subunit protein uS17 (86 aa).

This sequence belongs to the universal ribosomal protein uS17 family. As to quaternary structure, part of the 30S ribosomal subunit.

Its function is as follows. One of the primary rRNA binding proteins, it binds specifically to the 5'-end of 16S ribosomal RNA. The sequence is that of Small ribosomal subunit protein uS17 from Streptococcus gordonii (strain Challis / ATCC 35105 / BCRC 15272 / CH1 / DL1 / V288).